Consider the following 459-residue polypeptide: Cysteine--tRNA ligase (459 aa).

C28 contributes to the Zn(2+) binding site. The 'HIGH' region signature appears at V30–H40. Zn(2+) is bound by residues C209, H234, and E238. Residues K266 to S270 carry the 'KMSKS' region motif. Residue K269 participates in ATP binding.

The protein belongs to the class-I aminoacyl-tRNA synthetase family. As to quaternary structure, monomer. Zn(2+) is required as a cofactor.

The protein resides in the cytoplasm. It catalyses the reaction tRNA(Cys) + L-cysteine + ATP = L-cysteinyl-tRNA(Cys) + AMP + diphosphate. The chain is Cysteine--tRNA ligase from Histophilus somni (strain 129Pt) (Haemophilus somnus).